The sequence spans 194 residues: Methyl-CpG-binding domain protein 3-like 1 (194 aa).

The interval 1–104 (MAKSSQRKQR…KLVPSYTGGS (104 aa)) is transcription repressor.

Belongs to the MBD3L family. As to expression, highly expressed in testis. Detected at low levels in pancreas. Not detected in the other tissues tested.

The protein localises to the nucleus. Its function is as follows. Transcriptional repressor. This Homo sapiens (Human) protein is Methyl-CpG-binding domain protein 3-like 1 (MBD3L1).